We begin with the raw amino-acid sequence, 618 residues long: 1-deoxy-D-xylulose-5-phosphate synthase (618 aa).

Residues H70 and 111 to 113 (GHS) each bind thiamine diphosphate. A Mg(2+)-binding site is contributed by D142. Thiamine diphosphate contacts are provided by residues 143 to 144 (GS), N171, Y278, and E360. N171 lines the Mg(2+) pocket.

The protein belongs to the transketolase family. DXPS subfamily. As to quaternary structure, homodimer. The cofactor is Mg(2+). It depends on thiamine diphosphate as a cofactor.

The catalysed reaction is D-glyceraldehyde 3-phosphate + pyruvate + H(+) = 1-deoxy-D-xylulose 5-phosphate + CO2. The protein operates within metabolic intermediate biosynthesis; 1-deoxy-D-xylulose 5-phosphate biosynthesis; 1-deoxy-D-xylulose 5-phosphate from D-glyceraldehyde 3-phosphate and pyruvate: step 1/1. In terms of biological role, catalyzes the acyloin condensation reaction between C atoms 2 and 3 of pyruvate and glyceraldehyde 3-phosphate to yield 1-deoxy-D-xylulose-5-phosphate (DXP). This is 1-deoxy-D-xylulose-5-phosphate synthase from Helicobacter pylori (strain ATCC 700392 / 26695) (Campylobacter pylori).